The sequence spans 266 residues: Undecaprenyl-diphosphatase (266 aa).

The next 8 membrane-spanning stretches (helical) occupy residues 1–21 (METF…FLPI), 39–59 (QGFS…VIYF), 87–107 (WWII…KDFI), 111–131 (LRNT…LWWA), 149–169 (ALLI…RSGA), 183–203 (AAAK…AILV), 218–238 (ALGI…YYFL), and 246–266 (MTPF…LILW).

Belongs to the UppP family.

The protein localises to the cell inner membrane. It carries out the reaction di-trans,octa-cis-undecaprenyl diphosphate + H2O = di-trans,octa-cis-undecaprenyl phosphate + phosphate + H(+). Catalyzes the dephosphorylation of undecaprenyl diphosphate (UPP). Confers resistance to bacitracin. This Shewanella denitrificans (strain OS217 / ATCC BAA-1090 / DSM 15013) protein is Undecaprenyl-diphosphatase.